We begin with the raw amino-acid sequence, 970 residues long: ATP-dependent DNA helicase DDX11 (970 aa).

The 437-residue stretch at 9–445 (GAIHFPFPFT…KNLMYLKQIL (437 aa)) folds into the Helicase ATP-binding domain. Residue 44–51 (SPTGTGKS) participates in ATP binding. Phosphoserine is present on Ser262. [4Fe-4S] cluster contacts are provided by Cys267 and Cys285. Over residues 289–304 (QRSRHEKKKGAEEEKP) the composition is skewed to basic and acidic residues. Residues 289–312 (QRSRHEKKKGAEEEKPKRRRQEKQ) are disordered. [4Fe-4S] cluster is bound by residues Cys315 and Cys350. The DEAH box motif lies at 393–396 (DEAH). Residues 818–849 (TLSPRPGTPREGSGGEPVHEGRQPVHRQGHQA) form a disordered region.

The protein belongs to the DEAD box helicase family. DEAH subfamily. DDX11/CHL1 sub-subfamily. Associates with the CTF18-RFC complex. Associates with a cohesin complex composed of RAD21, SMC1 proteins and SMC3. Interacts with CHTF18. Interacts with DSCC1. Interacts with FEN1; this interaction is direct and increases flap endonuclease activity of FEN1. Interacts with PCNA. Interacts with POLR1A and UBTF. Interacts with RAD21, SMC1 proteins and SMC3. Interacts with RFC2. Interacts with TIMELESS; this interaction increases recruitment of both proteins onto chromatin in response to replication stress induction by hydroxyurea. In terms of assembly, (Microbial infection) Interacts with bovine papillomavirus type 1 regulatory protein E2; this interaction stimulates the recruitment of E2 onto mitotic chromosomes. Mg(2+) serves as cofactor. Requires [4Fe-4S] cluster as cofactor. As to expression, expressed in melanoma cells. Not detected in epidermal melanocytes of normal skin (at protein level). Highly expressed in spleen, B-cells, thymus, testis, ovary, small intestine and pancreas. Very low expression seen in brain. Expressed in dividing cells and/or cells undergoing high levels of recombination. No expression detected in cells signaled to terminally differentiate. Expressed weakly in keratinocytes.

Its subcellular location is the nucleus. It localises to the nucleolus. The protein resides in the cytoplasm. The protein localises to the cytoskeleton. It is found in the spindle pole. Its subcellular location is the midbody. It localises to the microtubule organizing center. The protein resides in the centrosome. The protein localises to the chromosome. The enzyme catalyses Couples ATP hydrolysis with the unwinding of duplex DNA at the replication fork by translocating in the 5'-3' direction. This creates two antiparallel DNA single strands (ssDNA). The leading ssDNA polymer is the template for DNA polymerase III holoenzyme which synthesizes a continuous strand.. It catalyses the reaction ATP + H2O = ADP + phosphate + H(+). With respect to regulation, ATPase activity is stimulated by high magnesium salt levels (up to a 0.1 M), and potassium salts (glutamate, chloride or acetate) are more effective than the corresponding sodium salts. ATPase activity is enhanced by the long non-coding RNA (lncRNA) cohesion regulator noncoding RNA (CONCR). Double-stranded DNA helicase activity is maximal with magnesium ions at low concentrations (0.5-1 mM) whereas is markedly inhibited at higher levels (5 mM and above). Double-stranded DNA helicase activity is stimulated by 25-50 mM potassium acetate, stimulated to a lesser extent by 25 mM of ammonium acetate, and markedly inhibited by sodium acetate. Functionally, DNA-dependent ATPase and ATP-dependent DNA helicase that participates in various functions in genomic stability, including DNA replication, DNA repair and heterochromatin organization as well as in ribosomal RNA synthesis. Its double-stranded DNA helicase activity requires either a minimal 5'-single-stranded tail length of approximately 15 nt (flap substrates) or 10 nt length single-stranded gapped DNA substrates of a partial duplex DNA structure for helicase loading and translocation along DNA in a 5' to 3' direction. The helicase activity is capable of displacing duplex regions up to 100 bp, which can be extended up to 500 bp by the replication protein A (RPA) or the cohesion CTF18-replication factor C (Ctf18-RFC) complex activities. Also shows ATPase- and helicase activities on substrates that mimic key DNA intermediates of replication, repair and homologous recombination reactions, including forked duplex, anti-parallel G-quadruplex and three-stranded D-loop DNA molecules. Plays a role in DNA double-strand break (DSB) repair at the DNA replication fork during DNA replication recovery from DNA damage. Recruited with TIMELESS factor upon DNA-replication stress response at DNA replication fork to preserve replication fork progression, and hence ensure DNA replication fidelity. Also cooperates with TIMELESS factor during DNA replication to regulate proper sister chromatid cohesion and mitotic chromosome segregation. Stimulates 5'-single-stranded DNA flap endonuclease activity of FEN1 in an ATP- and helicase-independent manner; and hence it may contribute in Okazaki fragment processing at DNA replication fork during lagging strand DNA synthesis. Its ability to function at DNA replication fork is modulated by its binding to long non-coding RNA (lncRNA) cohesion regulator non-coding RNA DDX11-AS1/CONCR, which is able to increase both DDX11 ATPase activity and binding to DNA replicating regions. Also plays a role in heterochromatin organization. Involved in rRNA transcription activation through binding to active hypomethylated rDNA gene loci by recruiting UBTF and the RNA polymerase Pol I transcriptional machinery. Plays a role in embryonic development and prevention of aneuploidy. Involved in melanoma cell proliferation and survival. Associates with chromatin at DNA replication fork regions. Binds to single- and double-stranded DNAs. (Microbial infection) Required for bovine papillomavirus type 1 regulatory protein E2 loading onto mitotic chromosomes during DNA replication for the viral genome to be maintained and segregated. The protein is ATP-dependent DNA helicase DDX11 of Homo sapiens (Human).